Here is a 293-residue protein sequence, read N- to C-terminus: Putative ribose uptake protein RbsU (293 aa).

The next 10 helical transmembrane spans lie at 5–24, 34–51, 58–80, 95–114, 121–138, 153–170, 177–199, 212–234, 241–263, and 273–292; these read ALLI…TVAS, IIGA…LAVV, TGTN…IITF, TTAF…LGNW, IIGF…RMTV, RAVV…LYSA, IDGL…IYGF, ITWL…LISA, LATG…IYFL, and VITI…TVFI.

This sequence belongs to the GRP transporter (TC 2.A.7.5) family.

It localises to the cell membrane. Could be involved in the uptake of ribose. This chain is Putative ribose uptake protein RbsU (rbsU), found in Staphylococcus aureus (strain COL).